The sequence spans 175 residues: Catabolic 3-dehydroquinase (175 aa).

Residue Tyr-23 is the Proton acceptor of the active site. Positions 74, 80, and 87 each coordinate substrate. His-100 serves as the catalytic Proton donor. Residues 101-102 (IS) and Arg-111 contribute to the substrate site.

It belongs to the type-II 3-dehydroquinase family. In terms of assembly, homododecamer. Adopts a ring-like structure, composed of an arrangement of two hexameric rings stacked on top of one another.

The catalysed reaction is 3-dehydroquinate = 3-dehydroshikimate + H2O. It functions in the pathway aromatic compound metabolism; 3,4-dihydroxybenzoate biosynthesis; 3,4-dihydroxybenzoate from 3-dehydroquinate: step 1/2. Functionally, is involved in the catabolism of quinate. Allows the utilization of quinate as carbon source via the beta-ketoadipate pathway. The protein is Catabolic 3-dehydroquinase of Talaromyces marneffei (strain ATCC 18224 / CBS 334.59 / QM 7333) (Penicillium marneffei).